The primary structure comprises 523 residues: 2-isopropylmalate synthase (523 aa).

Residues 5–267 form the Pyruvate carboxyltransferase domain; that stretch reads VIIFDTTLRD…ETGINAKEIH (263 aa). The Mn(2+) site is built by Asp-14, His-202, His-204, and Asn-238. A regulatory domain region spans residues 392 to 523; that stretch reads ELQQLVVHSD…QQNKQEFGSV (132 aa).

This sequence belongs to the alpha-IPM synthase/homocitrate synthase family. LeuA type 1 subfamily. In terms of assembly, homodimer. The cofactor is Mn(2+).

It is found in the cytoplasm. It catalyses the reaction 3-methyl-2-oxobutanoate + acetyl-CoA + H2O = (2S)-2-isopropylmalate + CoA + H(+). It functions in the pathway amino-acid biosynthesis; L-leucine biosynthesis; L-leucine from 3-methyl-2-oxobutanoate: step 1/4. Functionally, catalyzes the condensation of the acetyl group of acetyl-CoA with 3-methyl-2-oxobutanoate (2-ketoisovalerate) to form 3-carboxy-3-hydroxy-4-methylpentanoate (2-isopropylmalate). The polypeptide is 2-isopropylmalate synthase (Shewanella halifaxensis (strain HAW-EB4)).